The following is a 375-amino-acid chain: Anhydro-N-acetylmuramic acid kinase (375 aa).

12-19 (GTSLDGVD) is an ATP binding site.

The protein belongs to the anhydro-N-acetylmuramic acid kinase family.

It carries out the reaction 1,6-anhydro-N-acetyl-beta-muramate + ATP + H2O = N-acetyl-D-muramate 6-phosphate + ADP + H(+). It functions in the pathway amino-sugar metabolism; 1,6-anhydro-N-acetylmuramate degradation. Its pathway is cell wall biogenesis; peptidoglycan recycling. Catalyzes the specific phosphorylation of 1,6-anhydro-N-acetylmuramic acid (anhMurNAc) with the simultaneous cleavage of the 1,6-anhydro ring, generating MurNAc-6-P. Is required for the utilization of anhMurNAc either imported from the medium or derived from its own cell wall murein, and thus plays a role in cell wall recycling. In Variovorax paradoxus (strain S110), this protein is Anhydro-N-acetylmuramic acid kinase.